The following is a 376-amino-acid chain: Transcription factor Sp6 (376 aa).

The segment at 1–70 (MLTAVCGSLG…VDFSQGYELP (70 aa)) is disordered. The short motif at 118 to 126 (GSWWDLHPG) is the 9aaTAD element. Residues 167–223 (HPHAHHLLPAAGGQHLLGPPDGAKALEVAAPESQGLDSSLDGAARPKGSRRSVPRSS) are disordered. Over residues 173 to 186 (LLPAAGGQHLLGPP) the composition is skewed to low complexity. 3 C2H2-type zinc fingers span residues 254 to 278 (HNCH…LRWH), 284 to 308 (FVCN…LQTH), and 314 to 336 (FPCA…MKTH). Positions 333 to 343 (MKTHEGAKEEA) are enriched in basic and acidic residues. A disordered region spans residues 333-376 (MKTHEGAKEEAAGAASGEGKAGGAVEPPGGKGKREAEGSVAPSN).

Belongs to the Sp1 C2H2-type zinc-finger protein family. As to expression, ubiquitous.

The protein resides in the nucleus. Its function is as follows. Promotes cell proliferation. Plays a role in tooth germ growth. Plays a role in the control of enamel mineralization. Binds the AMBN promoter. In Homo sapiens (Human), this protein is Transcription factor Sp6 (SP6).